The chain runs to 577 residues: Vacuolar membrane amino acid uptake transporter fnx2 (577 aa).

Positions 1–14 (MSNPRTKSPNTNRG) are enriched in polar residues. The segment at 1–80 (MSNPRTKSPN…SPHRQDAATT (80 aa)) is disordered. Residues 22–39 (SALLNDSLSSLNGNSSYD) are compositionally biased toward low complexity. Residues 40 to 62 (SIKDSSKNNKDVAEVNEYPRRPE) are compositionally biased toward basic and acidic residues. A run of 14 helical transmembrane segments spans residues 91-111 (VLPALLLGVVLAALDNTIVAS), 123-145 (FSQVSWTATAYMISCTAFQPLFG), 157-177 (LLAAYCVFGIGCFLCGTSRSL), 186-206 (IAGIGGGGMNSTVSILMSDIV), 217-237 (IINVFFAIGSSLGGPVGGYFA), 244-264 (IGFLIQVPLIAIAFLCVYFTL), 286-306 (LILLIIGVTTMTCAFTLGGNV), 317-337 (LLIASSISYLSFVYVEAFVAF), 356-376 (LCNFFHSVANFGWIYGMPLFF), 391-411 (LIPMIIGSSLGSLLGGAVISL), 418-438 (ITVGSYFFGSVAALFMLRYGY), 448-468 (YPFSGGLGNGIAVTTTLVAII), 490-510 (GCVLGVSISSSIVQTVLGIKL), and 547-567 (LLGSIHYSFLFVSFMFFCAFV).

Belongs to the major facilitator superfamily.

The protein resides in the vacuole. It is found in the membrane. MFS-type transporter involved in vacuolar amino acid uptake. The chain is Vacuolar membrane amino acid uptake transporter fnx2 (fnx2) from Schizosaccharomyces pombe (strain 972 / ATCC 24843) (Fission yeast).